A 680-amino-acid polypeptide reads, in one-letter code: DNA-directed RNA polymerase subunit beta' (680 aa).

Cys69, Cys71, Cys87, and Cys90 together coordinate Zn(2+). Residues Asp489, Asp491, and Asp493 each contribute to the Mg(2+) site.

The protein belongs to the RNA polymerase beta' chain family. RpoC1 subfamily. In plastids the minimal PEP RNA polymerase catalytic core is composed of four subunits: alpha, beta, beta', and beta''. When a (nuclear-encoded) sigma factor is associated with the core the holoenzyme is formed, which can initiate transcription. Mg(2+) serves as cofactor. It depends on Zn(2+) as a cofactor.

The protein localises to the plastid. Its subcellular location is the chloroplast. The catalysed reaction is RNA(n) + a ribonucleoside 5'-triphosphate = RNA(n+1) + diphosphate. Its function is as follows. DNA-dependent RNA polymerase catalyzes the transcription of DNA into RNA using the four ribonucleoside triphosphates as substrates. The chain is DNA-directed RNA polymerase subunit beta' from Carica papaya (Papaya).